A 460-amino-acid chain; its full sequence is Cysteine--tRNA ligase (460 aa).

C28 contributes to the Zn(2+) binding site. Residues 30–40 carry the 'HIGH' region motif; the sequence is MTVYDYCHLGH. Zn(2+) contacts are provided by C209, H234, and E238. Positions 266 to 270 match the 'KMSKS' region motif; sequence KMSKS. K269 is an ATP binding site.

Belongs to the class-I aminoacyl-tRNA synthetase family. In terms of assembly, monomer. Zn(2+) is required as a cofactor.

The protein localises to the cytoplasm. It carries out the reaction tRNA(Cys) + L-cysteine + ATP = L-cysteinyl-tRNA(Cys) + AMP + diphosphate. In Pseudomonas fluorescens (strain Pf0-1), this protein is Cysteine--tRNA ligase.